The following is a 101-amino-acid chain: Small ribosomal subunit protein uS14 (101 aa).

The protein belongs to the universal ribosomal protein uS14 family. Part of the 30S ribosomal subunit. Contacts proteins S3 and S10.

Binds 16S rRNA, required for the assembly of 30S particles and may also be responsible for determining the conformation of the 16S rRNA at the A site. The sequence is that of Small ribosomal subunit protein uS14 from Leifsonia xyli subsp. xyli (strain CTCB07).